The primary structure comprises 122 residues: MSITKEQILDAISEMSVMNIVELISDMEKKFGVSSIIPSSSTSTQNIETAEAKTEFDVLLKSIGGNKVSVIKAVRSATGLGLKEAKDLVESAPTIIKERITQDAAESLKKILNETGAEVEIK.

Belongs to the bacterial ribosomal protein bL12 family. Homodimer. Part of the ribosomal stalk of the 50S ribosomal subunit. Forms a multimeric L10(L12)X complex, where L10 forms an elongated spine to which 2 to 4 L12 dimers bind in a sequential fashion. Binds GTP-bound translation factors.

Functionally, forms part of the ribosomal stalk which helps the ribosome interact with GTP-bound translation factors. Is thus essential for accurate translation. The polypeptide is Large ribosomal subunit protein bL12 (Buchnera aphidicola subsp. Baizongia pistaciae (strain Bp)).